Reading from the N-terminus, the 148-residue chain is uncharacterized protein (148 aa).

Positions 38–99 (QFRRHHHAEH…RRHLRKGHLK (62 aa)) are disordered. Residues 64-82 (FHHDGGRHGHATRIHENNR) are compositionally biased toward basic and acidic residues. Positions 83–99 (RPHKRNRRRHLRKGHLK) are enriched in basic residues.

This is an uncharacterized protein from Fowl adenovirus A serotype 1 (strain CELO / Phelps) (FAdV-1).